Reading from the N-terminus, the 1257-residue chain is Stromal processing peptidase, chloroplastic (1257 aa).

Residues 1–142 constitute a chloroplast transit peptide; the sequence is MAASTSTSSL…ASVKRVQLPH (142 aa). Residue histidine 236 participates in Zn(2+) binding. The active-site Proton acceptor is the glutamate 239. Histidine 240 serves as a coordination point for Zn(2+). Residue glutamate 309 is part of the active site. Glutamate 316 lines the Zn(2+) pocket. The interval 1233 to 1257 is disordered; it reads EEAGEGYPGVLPMGRGLSTMTRPTT.

This sequence belongs to the peptidase M16 family. Zn(2+) serves as cofactor.

It localises to the plastid. The protein resides in the chloroplast stroma. Functionally, cleaves presequences (transit peptides) from chloroplastic protein precursors. Initially recognizes a precursor by binding to the C-terminus of its transit peptide and then removes the transit peptide in a single endoproteolytic step. In a next step, pursues the cleavage of transit peptide to a subfragment form. The sequence is that of Stromal processing peptidase, chloroplastic from Pisum sativum (Garden pea).